Here is an 87-residue protein sequence, read N- to C-terminus: Small ribosomal subunit protein bS20 (87 aa).

The interval M1 to M27 is disordered.

Belongs to the bacterial ribosomal protein bS20 family.

In terms of biological role, binds directly to 16S ribosomal RNA. The protein is Small ribosomal subunit protein bS20 of Pectobacterium carotovorum subsp. carotovorum (strain PC1).